Reading from the N-terminus, the 831-residue chain is uncharacterized protein (831 aa).

The CID domain occupies 1-146; sequence MDIFDSTITS…RAFSILSGVA (146 aa). Disordered stretches follow at residues 205-233, 265-354, 434-480, and 572-831; these read SSSSSSSSSSSSSSTTTTTTTTSELSSIS, KEHF…NYNN, IGNS…NEDS, and CGAD…SNRH. 2 stretches are compositionally biased toward low complexity: residues 272–354 and 434–477; these read NDTS…NYNN and IGNS…NNNN. Basic and acidic residues-rich tracts occupy residues 592–601 and 611–813; these read NENKQNDSHR and SRGE…RSKE. The segment covering 817-831 has biased composition (low complexity); that stretch reads NNDNRSSSNRSSNRH.

This is an uncharacterized protein from Dictyostelium discoideum (Social amoeba).